The primary structure comprises 214 residues: Thymidylate kinase (214 aa).

10–17 is a binding site for ATP; that stretch reads GGEGAGKS.

Belongs to the thymidylate kinase family.

It catalyses the reaction dTMP + ATP = dTDP + ADP. In terms of biological role, phosphorylation of dTMP to form dTDP in both de novo and salvage pathways of dTTP synthesis. The polypeptide is Thymidylate kinase (Brucella canis (strain ATCC 23365 / NCTC 10854 / RM-666)).